The chain runs to 338 residues: Nicotinate-nucleotide--dimethylbenzimidazole phosphoribosyltransferase (338 aa).

Catalysis depends on Glu-305, which acts as the Proton acceptor.

It belongs to the CobT family.

It carries out the reaction 5,6-dimethylbenzimidazole + nicotinate beta-D-ribonucleotide = alpha-ribazole 5'-phosphate + nicotinate + H(+). The protein operates within nucleoside biosynthesis; alpha-ribazole biosynthesis; alpha-ribazole from 5,6-dimethylbenzimidazole: step 1/2. In terms of biological role, catalyzes the synthesis of alpha-ribazole-5'-phosphate from nicotinate mononucleotide (NAMN) and 5,6-dimethylbenzimidazole (DMB). This chain is Nicotinate-nucleotide--dimethylbenzimidazole phosphoribosyltransferase, found in Rhizobium etli (strain CIAT 652).